We begin with the raw amino-acid sequence, 735 residues long: Urea active transporter (735 aa).

Residues 1–14 (MGEFKPPLPQGAGY) lie on the Cytoplasmic side of the membrane. A helical transmembrane segment spans residues 15–35 (AIVLGLGAVFAGMMVLTTYLL). Residues 36–85 (KRYQKEIITAEEFTTAGRSVKTGLVAAAVVSSWIWCSTLLTSSTKEYADG) are Extracellular-facing. The chain crosses the membrane as a helical span at residues 86–106 (IFGGYAYAAGACFQIIAFAIL). Topologically, residues 107 to 130 (AIKTKQMAPNAHTYLELVRTRYGK) are cytoplasmic. A helical transmembrane segment spans residues 131–151 (IGHGCYLFYAIATNILVTSML). The Extracellular segment spans residues 152 to 166 (LTSGSAVFSDLTGMN). A helical transmembrane segment spans residues 167-187 (TIASCFLLPVGVVVYTLFGGI). At 188 to 189 (KA) the chain is on the cytoplasmic side. A helical transmembrane segment spans residues 190–210 (TFLTDYMHTCVIIIIVLVFAF). The Extracellular segment spans residues 211-253 (KVYATSDVLGSPGKVYDLVREAAKRHPVDGNYQGEYMTMTSKS). The helical transmembrane segment at 254 to 274 (AGILLIINLIGNFGTVFLDNG) threads the bilayer. At 275-295 (YWNKAISASPAASLKAYAIGG) the chain is on the cytoplasmic side. The chain crosses the membrane as a helical span at residues 296–316 (LAWFAVPSLISLTMGLACLAV). Residues 317 to 343 (ETSPNFPTYPDPLTSFQANSGLVLPAA) lie on the Extracellular side of the membrane. The chain crosses the membrane as a helical span at residues 344-364 (AIAIMGKGGAVASLLMIFMAV). At 365-403 (TSAMSAELIAVSSVFTYDIYREYIDPRASGKKLIYTSHV) the chain is on the cytoplasmic side. Residues 404–424 (ACIFFGLAMSGFSVGLYYGGI) form a helical membrane-spanning segment. Residue Ser425 is a topological domain, extracellular. Residues 426-446 (MGYIYEMMGIIISSAVLPVVL) form a helical membrane-spanning segment. The Cytoplasmic segment spans residues 447-454 (TLCSKDMN). A helical membrane pass occupies residues 455–475 (LVAAVVSPILGTGLAIMSWLV). Over 476-496 (CTKSLYKELTVDTTFMDYPML) the chain is Extracellular. A helical membrane pass occupies residues 497–517 (TGNLVALLSPAIFIPILTYVF). The Cytoplasmic segment spans residues 518-618 (KPQNFDWEKM…EQRELARGLK (101 aa)). A disordered region spans residues 553–572 (ANDKEQEEETNSLVSDSEKN). The chain crosses the membrane as a helical span at residues 619-639 (IAYFLCVFFALAFLVVWPMPM). Topologically, residues 640 to 650 (YGSKYIFSKKF) are extracellular. A helical membrane pass occupies residues 651–671 (FTGWVVVMIIWLFFSAFAVCI). Residues 672–735 (YPLWEGRHGI…SHFGQVDEII (64 aa)) lie on the Cytoplasmic side of the membrane.

It belongs to the sodium:solute symporter (SSF) (TC 2.A.21) family. In terms of assembly, may polymerize.

The protein localises to the membrane. Required for active transport of urea. The protein is Urea active transporter (DUR3) of Saccharomyces cerevisiae (strain ATCC 204508 / S288c) (Baker's yeast).